A 180-amino-acid polypeptide reads, in one-letter code: WPP domain-containing protein 2 (180 aa).

The span at 1–26 (MAETAETINTTISSPPPESESSTTIS) shows a compositional bias: low complexity. Disordered regions lie at residues 1–61 (MAET…LRIW) and 140–180 (SVKA…KSEA). A compositionally biased stretch (polar residues) spans 27 to 36 (AMTDPTSQEA). The span at 37–53 (ASKDTDLTKEAESEKKP) shows a compositional bias: basic and acidic residues. Positions 44 to 147 (TKEAESEKKP…LESVKARSNA (104 aa)) are WPP. S173 carries the post-translational modification Phosphoserine.

Binds to FPP proteins. Interacts with WAP, WIP1, WIP2 and WIP3 through its WPP domain. Interacts with WIT1 and HSP70-1. As to expression, expressed in roots, stems, leaves and flowers.

Its subcellular location is the nucleus envelope. The protein localises to the cytoplasm. The protein resides in the nucleus. It localises to the golgi apparatus. Its function is as follows. Regulates the mitotic activity in roots. Plays a role with HSP70-1 in facilitating WIT1 nuclear envelope targeting. In Arabidopsis thaliana (Mouse-ear cress), this protein is WPP domain-containing protein 2 (WPP2).